A 507-amino-acid chain; its full sequence is ATP synthase subunit alpha (507 aa).

168–175 is a binding site for ATP; that stretch reads GDRQTGKT.

Belongs to the ATPase alpha/beta chains family. F-type ATPases have 2 components, CF(1) - the catalytic core - and CF(0) - the membrane proton channel. CF(1) has five subunits: alpha(3), beta(3), gamma(1), delta(1), epsilon(1). CF(0) has three main subunits: a(1), b(2) and c(9-12). The alpha and beta chains form an alternating ring which encloses part of the gamma chain. CF(1) is attached to CF(0) by a central stalk formed by the gamma and epsilon chains, while a peripheral stalk is formed by the delta and b chains.

Its subcellular location is the cell membrane. It catalyses the reaction ATP + H2O + 4 H(+)(in) = ADP + phosphate + 5 H(+)(out). Produces ATP from ADP in the presence of a proton gradient across the membrane. The alpha chain is a regulatory subunit. The sequence is that of ATP synthase subunit alpha from Mesomycoplasma hyopneumoniae (strain 7448) (Mycoplasma hyopneumoniae).